We begin with the raw amino-acid sequence, 201 residues long: Small ribosomal subunit protein uS4c (201 aa).

The S4 RNA-binding domain occupies Met89–Lys150.

The protein belongs to the universal ribosomal protein uS4 family. Part of the 30S ribosomal subunit. Contacts protein S5. The interaction surface between S4 and S5 is involved in control of translational fidelity.

It localises to the plastid. The protein localises to the chloroplast. Functionally, one of the primary rRNA binding proteins, it binds directly to 16S rRNA where it nucleates assembly of the body of the 30S subunit. In terms of biological role, with S5 and S12 plays an important role in translational accuracy. The polypeptide is Small ribosomal subunit protein uS4c (rps4) (Funaria hygrometrica (Moss)).